Reading from the N-terminus, the 703-residue chain is Polyribonucleotide nucleotidyltransferase (703 aa).

Mg(2+)-binding residues include Asp486 and Asp492. The KH domain maps to 553-612 (PKIEIIHINPDKIRDVIGPGGKKINEIIDATGVKLDIEQDGTVFIGSSDASMIEAAKKLI). An S1 motif domain is found at 622-690 (GQIYMATVKR…KQGRVNASRK (69 aa)).

The protein belongs to the polyribonucleotide nucleotidyltransferase family. Mg(2+) serves as cofactor.

It is found in the cytoplasm. It carries out the reaction RNA(n+1) + phosphate = RNA(n) + a ribonucleoside 5'-diphosphate. Functionally, involved in mRNA degradation. Catalyzes the phosphorolysis of single-stranded polyribonucleotides processively in the 3'- to 5'-direction. In Macrococcus caseolyticus (strain JCSC5402) (Macrococcoides caseolyticum), this protein is Polyribonucleotide nucleotidyltransferase.